The primary structure comprises 38 residues: Photosystem II reaction center protein L (38 aa).

A helical transmembrane segment spans residues 17–37 (SLYWGLLLIFVLAVLFSNYFF).

This sequence belongs to the PsbL family. PSII is composed of 1 copy each of membrane proteins PsbA, PsbB, PsbC, PsbD, PsbE, PsbF, PsbH, PsbI, PsbJ, PsbK, PsbL, PsbM, PsbT, PsbX, PsbY, PsbZ, Psb30/Ycf12, at least 3 peripheral proteins of the oxygen-evolving complex and a large number of cofactors. It forms dimeric complexes.

It is found in the plastid. The protein resides in the chloroplast thylakoid membrane. In terms of biological role, one of the components of the core complex of photosystem II (PSII). PSII is a light-driven water:plastoquinone oxidoreductase that uses light energy to abstract electrons from H(2)O, generating O(2) and a proton gradient subsequently used for ATP formation. It consists of a core antenna complex that captures photons, and an electron transfer chain that converts photonic excitation into a charge separation. This subunit is found at the monomer-monomer interface and is required for correct PSII assembly and/or dimerization. The polypeptide is Photosystem II reaction center protein L (Huperzia lucidula (Shining clubmoss)).